The chain runs to 306 residues: UDP-3-O-acyl-N-acetylglucosamine deacetylase (306 aa).

3 residues coordinate Zn(2+): H79, H238, and D242. H265 acts as the Proton donor in catalysis.

This sequence belongs to the LpxC family. Requires Zn(2+) as cofactor.

It catalyses the reaction a UDP-3-O-[(3R)-3-hydroxyacyl]-N-acetyl-alpha-D-glucosamine + H2O = a UDP-3-O-[(3R)-3-hydroxyacyl]-alpha-D-glucosamine + acetate. The protein operates within glycolipid biosynthesis; lipid IV(A) biosynthesis; lipid IV(A) from (3R)-3-hydroxytetradecanoyl-[acyl-carrier-protein] and UDP-N-acetyl-alpha-D-glucosamine: step 2/6. Functionally, catalyzes the hydrolysis of UDP-3-O-myristoyl-N-acetylglucosamine to form UDP-3-O-myristoylglucosamine and acetate, the committed step in lipid A biosynthesis. The polypeptide is UDP-3-O-acyl-N-acetylglucosamine deacetylase (Shewanella pealeana (strain ATCC 700345 / ANG-SQ1)).